The chain runs to 122 residues: Putative 2'-deoxynucleoside 5'-phosphate N-hydrolase 1 (122 aa).

Residues 4-10 (FLSGSIR), Tyr19, His37, Glu83, and 105-107 (SAM) each bind substrate.

It belongs to the 2'-deoxynucleoside 5'-phosphate N-hydrolase 1 family. Monomer and homodimer.

The catalysed reaction is a pyrimidine 2'-deoxyribonucleoside 5'-phosphate + H2O = a pyrimidine nucleobase + 2-deoxy-D-ribose 5-phosphate. It catalyses the reaction a purine 2'-deoxyribonucleoside 5'-phosphate + H2O = a purine nucleobase + 2-deoxy-D-ribose 5-phosphate. Its function is as follows. Catalyzes the cleavage of the N-glycosidic bond of deoxyribonucleoside 5'-monophosphates to yield deoxyribose 5-phosphate and a purine or pyrimidine base. In Methanococcoides burtonii (strain DSM 6242 / NBRC 107633 / OCM 468 / ACE-M), this protein is Putative 2'-deoxynucleoside 5'-phosphate N-hydrolase 1.